A 359-amino-acid chain; its full sequence is Peptide chain release factor 1 (359 aa).

Gln236 bears the N5-methylglutamine mark.

It belongs to the prokaryotic/mitochondrial release factor family. Methylated by PrmC. Methylation increases the termination efficiency of RF1.

Its subcellular location is the cytoplasm. Functionally, peptide chain release factor 1 directs the termination of translation in response to the peptide chain termination codons UAG and UAA. In Streptococcus pneumoniae (strain Taiwan19F-14), this protein is Peptide chain release factor 1.